Here is a 673-residue protein sequence, read N- to C-terminus: Ion-translocating oxidoreductase complex subunit C (673 aa).

2 4Fe-4S ferredoxin-type domains span residues 368–397 (MGAPQEEKSCIRCSACADACPADLLPQQLY) and 407–436 (KATAHHIADCIECGACAWVCPSNIPLVQYF). Positions 377, 380, 383, 387, 416, 419, 422, and 426 each coordinate [4Fe-4S] cluster. Disordered stretches follow at residues 534-553 (QARAKQAAHPVADSAISGGA) and 563-653 (IARA…AAVA).

It belongs to the 4Fe4S bacterial-type ferredoxin family. RnfC subfamily. In terms of assembly, the complex is composed of six subunits: RsxA, RsxB, RsxC, RsxD, RsxE and RsxG. Requires [4Fe-4S] cluster as cofactor.

It localises to the cell inner membrane. In terms of biological role, part of a membrane-bound complex that couples electron transfer with translocation of ions across the membrane. Required to maintain the reduced state of SoxR. This Salmonella gallinarum (strain 287/91 / NCTC 13346) protein is Ion-translocating oxidoreductase complex subunit C.